Here is a 308-residue protein sequence, read N- to C-terminus: PAK4-inhibitor inka1 (308 aa).

The disordered stretch occupies residues 81-105 (EEEESASDPSAVSSPSSERSLEFDS). The segment covering 87–98 (SDPSAVSSPSSE) has biased composition (low complexity). Inka box regions lie at residues 164 to 201 (DPED…DLPE) and 281 to 308 (DTDY…IGYI).

Belongs to the INKA family. Interacts with pak4/pak5.

It is found in the nucleus. It localises to the cytoplasm. Its function is as follows. Inhibitor of the serine/threonine-protein kinase pak4/pak5. Acts by binding pak4/pak5 in a substrate-like manner, inhibiting the protein kinase activity. Required for the proper migration of neural crest cells during embryonic development, probably by inhibiting pak4/pak5. In Danio rerio (Zebrafish), this protein is PAK4-inhibitor inka1.